Here is a 210-residue protein sequence, read N- to C-terminus: ATP-dependent dethiobiotin synthetase BioD (210 aa).

13–18 (GIGKTV) lines the ATP pocket. Residue Thr-17 participates in Mg(2+) binding. Lys-33 is an active-site residue. Mg(2+) is bound at residue Glu-101. ATP contacts are provided by residues 101–104 (EGAG) and 185–187 (PWL).

The protein belongs to the dethiobiotin synthetase family. Homodimer. The cofactor is Mg(2+).

The protein localises to the cytoplasm. It catalyses the reaction (7R,8S)-7,8-diammoniononanoate + CO2 + ATP = (4R,5S)-dethiobiotin + ADP + phosphate + 3 H(+). It functions in the pathway cofactor biosynthesis; biotin biosynthesis; biotin from 7,8-diaminononanoate: step 1/2. Catalyzes a mechanistically unusual reaction, the ATP-dependent insertion of CO2 between the N7 and N8 nitrogen atoms of 7,8-diaminopelargonic acid (DAPA, also called 7,8-diammoniononanoate) to form a ureido ring. The sequence is that of ATP-dependent dethiobiotin synthetase BioD from Bradyrhizobium sp. (strain BTAi1 / ATCC BAA-1182).